A 362-amino-acid polypeptide reads, in one-letter code: Chorismate synthase (362 aa).

Arg46 serves as a coordination point for NADP(+). FMN-binding positions include 122 to 124 (RSS), 238 to 239 (NA), Gly278, 293 to 297 (KPTPS), and Arg319.

Belongs to the chorismate synthase family. In terms of assembly, homotetramer. FMNH2 serves as cofactor.

The catalysed reaction is 5-O-(1-carboxyvinyl)-3-phosphoshikimate = chorismate + phosphate. It participates in metabolic intermediate biosynthesis; chorismate biosynthesis; chorismate from D-erythrose 4-phosphate and phosphoenolpyruvate: step 7/7. Functionally, catalyzes the anti-1,4-elimination of the C-3 phosphate and the C-6 proR hydrogen from 5-enolpyruvylshikimate-3-phosphate (EPSP) to yield chorismate, which is the branch point compound that serves as the starting substrate for the three terminal pathways of aromatic amino acid biosynthesis. This reaction introduces a second double bond into the aromatic ring system. The polypeptide is Chorismate synthase (Campylobacter jejuni subsp. jejuni serotype O:23/36 (strain 81-176)).